Here is a 743-residue protein sequence, read N- to C-terminus: Acetyl-coenzyme A synthetase, chloroplastic/glyoxysomal (743 aa).

The N-terminal 84 residues, 1 to 84, are a transit peptide targeting the chloroplast; that stretch reads MKIGSPSSPI…LNAVVLGESL (84 aa). Asp-613 is an active-site residue.

Belongs to the ATP-dependent AMP-binding enzyme family. In terms of tissue distribution, expressed in leaves, flower buds and young flowers.

The protein localises to the plastid. It localises to the chloroplast. The protein resides in the glyoxysome. It carries out the reaction acetate + ATP + CoA = acetyl-CoA + AMP + diphosphate. Catalyzes the production of acetyl-CoA, an activated form of acetate that can be used for lipid synthesis or for energy generation. May play a limited role in the biosynthesis of lipids. The polypeptide is Acetyl-coenzyme A synthetase, chloroplastic/glyoxysomal (ACS) (Arabidopsis thaliana (Mouse-ear cress)).